Reading from the N-terminus, the 369-residue chain is Flagellar P-ring protein (369 aa).

Positions 1 to 23 are cleaved as a signal peptide; the sequence is MRIASFFTVLLTLLTLNITPASA.

Belongs to the FlgI family. In terms of assembly, the basal body constitutes a major portion of the flagellar organelle and consists of four rings (L,P,S, and M) mounted on a central rod.

It localises to the periplasm. The protein localises to the bacterial flagellum basal body. Functionally, assembles around the rod to form the L-ring and probably protects the motor/basal body from shearing forces during rotation. This Pectobacterium atrosepticum (strain SCRI 1043 / ATCC BAA-672) (Erwinia carotovora subsp. atroseptica) protein is Flagellar P-ring protein.